A 293-amino-acid polypeptide reads, in one-letter code: MSDWKSMSKDELELQYSPSRWSPRMSADDVIRAHVSALKSGTERARSVTQTLMDVPYGEAEGEKLDVYLPSSSSPDVPLVIYFHGGYWQFLSKDESGFLAVPLVQKGAVVVAVGYSIAPKGDMDLMVSQVRRSVVSVIQQYSHISGLYLCGHSAGAHLAAMVLSTDWTQYDVSPKIKGAFLVSGIYDLQPILSTYVNEPLKMTEEVALRNSPSRFLSQLKVSSASCDITVAVAQNDSPEFRKQSEEYYKALESAGLKVSFEDVSETDHFSIIEQLVDENYLLTKLLLKMIGKS.

An HGGXW motif is present at residues His-84–Trp-88. The active-site Nucleophile is the Ser-153. Residues Asp-236 and His-268 contribute to the active site.

Belongs to the kynurenine formamidase family. Homodimer.

Its subcellular location is the cytoplasm. It is found in the cytosol. The protein localises to the nucleus. It carries out the reaction N-formyl-L-kynurenine + H2O = L-kynurenine + formate + H(+). The protein operates within amino-acid degradation; L-tryptophan degradation via kynurenine pathway; L-kynurenine from L-tryptophan: step 2/2. Functionally, catalyzes the hydrolysis of N-formyl-L-kynurenine to L-kynurenine, the second step in the kynurenine pathway of tryptophan degradation. Kynurenine may be further oxidized to nicotinic acid, NAD(H) and NADP(H). Required for elimination of toxic metabolites. The polypeptide is Kynurenine formamidase (afmid) (Danio rerio (Zebrafish)).